The primary structure comprises 299 residues: Oxygen-dependent coproporphyrinogen-III oxidase (299 aa).

Position 92 (S92) interacts with substrate. Positions 96 and 106 each coordinate a divalent metal cation. H106 acts as the Proton donor in catalysis. Residue N108–R110 participates in substrate binding. Residues H145 and H175 each contribute to the a divalent metal cation site. Residues Y240–E275 form an important for dimerization region. G258–R260 is a substrate binding site.

This sequence belongs to the aerobic coproporphyrinogen-III oxidase family. In terms of assembly, homodimer. A divalent metal cation is required as a cofactor.

It is found in the cytoplasm. It catalyses the reaction coproporphyrinogen III + O2 + 2 H(+) = protoporphyrinogen IX + 2 CO2 + 2 H2O. Its pathway is porphyrin-containing compound metabolism; protoporphyrin-IX biosynthesis; protoporphyrinogen-IX from coproporphyrinogen-III (O2 route): step 1/1. Its function is as follows. Involved in the heme biosynthesis. Catalyzes the aerobic oxidative decarboxylation of propionate groups of rings A and B of coproporphyrinogen-III to yield the vinyl groups in protoporphyrinogen-IX. This is Oxygen-dependent coproporphyrinogen-III oxidase from Shigella dysenteriae serotype 1 (strain Sd197).